Consider the following 175-residue polypeptide: Adenine phosphoribosyltransferase (175 aa).

Belongs to the purine/pyrimidine phosphoribosyltransferase family. As to quaternary structure, homodimer.

It is found in the cytoplasm. It carries out the reaction AMP + diphosphate = 5-phospho-alpha-D-ribose 1-diphosphate + adenine. It functions in the pathway purine metabolism; AMP biosynthesis via salvage pathway; AMP from adenine: step 1/1. Functionally, catalyzes a salvage reaction resulting in the formation of AMP, that is energically less costly than de novo synthesis. The chain is Adenine phosphoribosyltransferase from Francisella tularensis subsp. tularensis (strain WY96-3418).